The sequence spans 558 residues: Membrane protein insertase YidC (558 aa).

A run of 5 helical transmembrane segments spans residues 3 to 23 (IKRT…FDNW), 364 to 384 (FVGN…AVFF), 438 to 458 (LPVV…LASV), 477 to 497 (PYFI…KLNP), and 508 to 528 (MMFM…GLVL).

This sequence belongs to the OXA1/ALB3/YidC family. Type 1 subfamily. As to quaternary structure, interacts with the Sec translocase complex via SecD. Specifically interacts with transmembrane segments of nascent integral membrane proteins during membrane integration.

Its subcellular location is the cell inner membrane. Functionally, required for the insertion and/or proper folding and/or complex formation of integral membrane proteins into the membrane. Involved in integration of membrane proteins that insert both dependently and independently of the Sec translocase complex, as well as at least some lipoproteins. Aids folding of multispanning membrane proteins. The protein is Membrane protein insertase YidC of Burkholderia pseudomallei (strain K96243).